The primary structure comprises 539 residues: Glutamyl-tRNA(Gln) amidotransferase subunit A, mitochondrial (539 aa).

Residues Lys-94 and Ser-181 each act as charge relay system in the active site. Ser-205 serves as the catalytic Acyl-ester intermediate.

It belongs to the amidase family. GatA subfamily. In terms of assembly, subunit of the heterotrimeric GatCAB amidotransferase (AdT) complex, composed of A, B and C subunits.

The protein resides in the mitochondrion. The catalysed reaction is L-glutamyl-tRNA(Gln) + L-glutamine + ATP + H2O = L-glutaminyl-tRNA(Gln) + L-glutamate + ADP + phosphate + H(+). Its function is as follows. Allows the formation of correctly charged Gln-tRNA(Gln) through the transamidation of misacylated Glu-tRNA(Gln) in the mitochondria. The reaction takes place in the presence of glutamine and ATP through an activated gamma-phospho-Glu-tRNA(Gln). The polypeptide is Glutamyl-tRNA(Gln) amidotransferase subunit A, mitochondrial (Mycosarcoma maydis (Corn smut fungus)).